Here is a 415-residue protein sequence, read N- to C-terminus: Adipocyte plasma membrane-associated protein (415 aa).

Residues methionine 1–glycine 30 are disordered. The Cytoplasmic portion of the chain corresponds to methionine 1 to arginine 39. The chain crosses the membrane as a helical span at residues valine 40–leucine 60. Residues aspartate 61–leucine 412 lie on the Extracellular side of the membrane. N-linked (GlcNAc...) asparagine glycosylation is present at asparagine 159.

This sequence belongs to the strictosidine synthase family.

It localises to the membrane. This Gallus gallus (Chicken) protein is Adipocyte plasma membrane-associated protein (APMAP).